The sequence spans 519 residues: Matrix metalloproteinase-B (519 aa).

The signal sequence occupies residues 1 to 26; it reads MTKWSPNGNPLSTIYLILSLFTLAHT. The propeptide at 27-126 is activation peptide; sequence APTTQHSRTT…RQEQTKRTKR (100 aa). Residues 29-39 are compositionally biased toward polar residues; it reads TTQHSRTTTQL. Residues 29 to 50 are disordered; the sequence is TTQHSRTTTQLRLEDEDGGGGV. The Cysteine switch signature appears at 109–116; sequence PRCTQTDV. Zn(2+)-binding residues include Cys-111, His-208, Asp-210, His-232, His-247, and His-276. Glu-277 is an active-site residue. Zn(2+) contacts are provided by His-280 and His-286. N-linked (GlcNAc...) asparagine glycosylation is present at Asn-341. Residues 391 to 402 show a composition bias toward basic and acidic residues; the sequence is KDKRSYRGDSKI. Residues 391–410 form a disordered region; that stretch reads KDKRSYRGDSKIPKCSSNNS. Asn-408 carries N-linked (GlcNAc...) asparagine glycosylation.

This sequence belongs to the peptidase M10A family. Requires Zn(2+) as cofactor. In terms of tissue distribution, expressed in spermatheca and spermathecal-uterine valve, weakly in vulva and anal muscles and in two cells in the head (probably RMEV and RMED motor neurons).

Its subcellular location is the secreted. It is found in the extracellular space. The protein resides in the extracellular matrix. Inhibited by human TIMP1 and TIMP2 and the broad MMP inhibitors BB94 (Batimastat) and CT543. Metalloprotease involved in molting, a process during larval stages in which a new cuticle is formed and the old cuticle is shed. Plays a role in thermotolerance probably by preventing the accumulation of oxidized lipoproteins and cholesterol. The sequence is that of Matrix metalloproteinase-B from Caenorhabditis elegans.